The primary structure comprises 492 residues: ATP synthase subunit beta, chloroplastic (492 aa).

Residue 170 to 177 (GGAGVGKT) coordinates ATP.

Belongs to the ATPase alpha/beta chains family. F-type ATPases have 2 components, CF(1) - the catalytic core - and CF(0) - the membrane proton channel. CF(1) has five subunits: alpha(3), beta(3), gamma(1), delta(1), epsilon(1). CF(0) has four main subunits: a(1), b(1), b'(1) and c(9-12).

The protein localises to the plastid. It is found in the chloroplast thylakoid membrane. The catalysed reaction is ATP + H2O + 4 H(+)(in) = ADP + phosphate + 5 H(+)(out). Produces ATP from ADP in the presence of a proton gradient across the membrane. The catalytic sites are hosted primarily by the beta subunits. The sequence is that of ATP synthase subunit beta, chloroplastic from Angiopteris evecta (Mule's foot fern).